We begin with the raw amino-acid sequence, 125 residues long: Profilin-A (125 aa).

Ser2 is subject to N-acetylserine.

This sequence belongs to the profilin family. In terms of assembly, occurs in many kinds of cells as a complex with monomeric actin in a 1:1 ratio.

It localises to the cytoplasm. The protein localises to the cytoskeleton. Functionally, binds to actin and affects the structure of the cytoskeleton. At high concentrations, profilin prevents the polymerization of actin, whereas it enhances it at low concentrations. By binding to PIP2, it inhibits the formation of IP3 and DG. The chain is Profilin-A (PROA) from Physarum polycephalum (Slime mold).